The sequence spans 463 residues: L-cystine uptake protein TcyP (463 aa).

10 consecutive transmembrane segments (helical) span residues 3 to 23 (TLLV…LFVM), 34 to 54 (VFTA…IYGP), 73 to 93 (YVKL…LGAF), 105 to 125 (ISGL…AVGI), 184 to 204 (PTST…FLGV), 225 to 245 (IVMR…LAIM), 262 to 282 (MFVI…LLLL), 338 to 358 (LSIG…MMIA), 369 to 389 (VFII…AGVG), and 394 to 414 (FAAL…GLLI).

Belongs to the dicarboxylate/amino acid:cation symporter (DAACS) (TC 2.A.23) family.

It localises to the cell membrane. In terms of biological role, mediates uptake of L-cystine, the oxidized form of L-cysteine. Although it is more specific for L-cystine, it could also transport a much broader range of amino acids and sulfur compounds including S-methylcysteine. The sequence is that of L-cystine uptake protein TcyP (tcyP) from Bacillus subtilis (strain 168).